The sequence spans 100 residues: Probable antitoxin MazE1 (100 aa).

The interval 77–100 (PYESEAERSAARARRNARQQRSAQ) is disordered.

In terms of assembly, forms a complex with cognate toxin MazF1.

Probable antitoxin component of a type II toxin-antitoxin (TA) system. Labile antitoxin that binds to cognate MazF1 toxin and counteracts its endoribonuclease activity. This is Probable antitoxin MazE1 (mazE1) from Mycobacterium bovis (strain ATCC BAA-935 / AF2122/97).